The sequence spans 197 residues: MRTNFIYHNANLIAGVDEVGRGPLVGAVVTAAVILDPQQPILGLADSKKLSEKKRILLATEIKQKALCWSLGRAEAEEIDQLNILHATMLAMQRAINALTIQPDFVLVDGNRIPSLNMPAQAIVKGDSLVAEISAASILAKVARDHEMQILDQQFPEYGFAQHKGYPTKLHIEKLAQFGATPFHRKSFAPVRKILGL.

One can recognise an RNase H type-2 domain in the interval 11-197 (NLIAGVDEVG…FAPVRKILGL (187 aa)). A divalent metal cation is bound by residues Asp-17, Glu-18, and Asp-109.

The protein belongs to the RNase HII family. The cofactor is Mn(2+). Mg(2+) is required as a cofactor.

The protein localises to the cytoplasm. The catalysed reaction is Endonucleolytic cleavage to 5'-phosphomonoester.. Its function is as follows. Endonuclease that specifically degrades the RNA of RNA-DNA hybrids. This Haemophilus ducreyi (strain 35000HP / ATCC 700724) protein is Ribonuclease HII.